The primary structure comprises 761 residues: BMP/retinoic acid-inducible neural-specific protein 1 (761 aa).

Residues 1–19 (MNWRFVELLYFLFIWGRIS) form the signal peptide. Residues 68-251 (RYKIYREFAR…FVQSALSYIM (184 aa)) enclose the MACPF domain. N-linked (GlcNAc...) asparagine glycans are attached at residues asparagine 156, asparagine 433, asparagine 443, asparagine 553, asparagine 599, asparagine 631, and asparagine 677.

It belongs to the BRINP family. As to expression, highly expressed in brain. Weakly expressed in heart, lung, skeletal muscle, kidney, thymus, prostate, testis and small intestine.

It localises to the cytoplasm. Plays a role in neurogenesis and brain development. May suppress cell cycle progression in postmitotic neurons by inhibiting G1/S transition. The chain is BMP/retinoic acid-inducible neural-specific protein 1 (BRINP1) from Homo sapiens (Human).